The following is a 77-amino-acid chain: Translation initiation factor IF-1, chloroplastic (77 aa).

Residues 1 to 71 form the S1-like domain; sequence MKEQKLIHEG…TRGRIIYRLR (71 aa).

It belongs to the IF-1 family. As to quaternary structure, component of the 30S ribosomal translation pre-initiation complex which assembles on the 30S ribosome in the order IF-2 and IF-3, IF-1 and N-formylmethionyl-tRNA(fMet); mRNA recruitment can occur at any time during PIC assembly.

Its subcellular location is the plastid. The protein localises to the chloroplast. Its function is as follows. One of the essential components for the initiation of protein synthesis. Stabilizes the binding of IF-2 and IF-3 on the 30S subunit to which N-formylmethionyl-tRNA(fMet) subsequently binds. Helps modulate mRNA selection, yielding the 30S pre-initiation complex (PIC). Upon addition of the 50S ribosomal subunit IF-1, IF-2 and IF-3 are released leaving the mature 70S translation initiation complex. This is Translation initiation factor IF-1, chloroplastic from Phalaenopsis aphrodite subsp. formosana (Moth orchid).